Reading from the N-terminus, the 231-residue chain is Ribosome maturation factor RimM (231 aa).

Residues M1–R29 form a disordered region. The region spanning T150–Y231 is the PRC barrel domain.

This sequence belongs to the RimM family. Binds ribosomal protein uS19.

Its subcellular location is the cytoplasm. Functionally, an accessory protein needed during the final step in the assembly of 30S ribosomal subunit, possibly for assembly of the head region. Essential for efficient processing of 16S rRNA. May be needed both before and after RbfA during the maturation of 16S rRNA. It has affinity for free ribosomal 30S subunits but not for 70S ribosomes. This Paraburkholderia phymatum (strain DSM 17167 / CIP 108236 / LMG 21445 / STM815) (Burkholderia phymatum) protein is Ribosome maturation factor RimM.